A 1312-amino-acid polypeptide reads, in one-letter code: Tetratricopeptide repeat protein 21B (1312 aa).

TPR repeat units lie at residues 4–38 (TDHY…YSND), 110–143 (PKAL…SNRS), 147–180 (LVLR…NKDI), 182–213 (ALIG…YPPF), 214–247 (LPAL…DGAN), and 325–358 (AEVA…DGNH). Residues 365-392 (VIQCQILQGQLEEAEQQLDFLHEIQESI) are a coiled coil. 16 TPR repeats span residues 493–526 (TEPL…DTAC), 528–560 (DFHL…NFKV), 564–597 (PLYH…QEMK), 615–648 (VSIY…FGGT), 720–753 (PHTS…NPQD), 755–787 (SLAN…SGQD), 789–820 (LCCD…EPVS), 829–861 (AKCL…QQRI), 881–914 (SEIC…SQDS), 916–947 (VKLQ…HSFK), 948–981 (EEAA…NPDN), 983–1015 (AVLS…SSRT), 1019–1052 (PGYN…SEWG), 1193–1226 (EKSW…NKSC), 1228–1260 (KAYE…SNQS), and 1262–1295 (PAVG…HPTY).

It belongs to the TTC21 family. As to quaternary structure, component of the IFT complex A (IFT-A).

Functionally, component of the IFT complex A (IFT-A), a complex required for retrograde ciliary transport and entry into cilia of G protein-coupled receptors (GPCRs). Negatively modulates the SHH signal transduction. The chain is Tetratricopeptide repeat protein 21B (ttc21b) from Xenopus laevis (African clawed frog).